The sequence spans 482 residues: Zinc finger CCCH domain-containing protein 40 (482 aa).

The C3H1-type zinc-finger motif lies at 157 to 184 (RNRAHVCSFYVRGECTRGAECPYRHEMP). The RRM domain occupies 228 to 301 (RTLYIGGLNN…IRLKLMWGKP (74 aa)). Low complexity-rich tracts occupy residues 329-347 (SQQQSGDQPQPPGMEGQQQ) and 389-428 (PGPQQAAQAQASSSSGQSYPMPPQYYHGQYPPYYPPYGGY). Residues 329 to 482 (SQQQSGDQPQ…VPPPQQTTQN (154 aa)) form a disordered region. Pro residues predominate over residues 429–446 (MPPPRMPYPPPPQYPPYQ). The span at 452–466 (PAQSQASSSQQPAPA) shows a compositional bias: low complexity. Pro residues predominate over residues 473–482 (VPPPQQTTQN).

In Oryza sativa subsp. japonica (Rice), this protein is Zinc finger CCCH domain-containing protein 40.